The sequence spans 61 residues: Small ribosomal subunit protein uS14 (61 aa).

Residues Cys-24, Cys-27, Cys-40, and Cys-43 each contribute to the Zn(2+) site.

The protein belongs to the universal ribosomal protein uS14 family. Zinc-binding uS14 subfamily. Part of the 30S ribosomal subunit. Contacts proteins S3 and S10. Zn(2+) is required as a cofactor.

Its function is as follows. Binds 16S rRNA, required for the assembly of 30S particles and may also be responsible for determining the conformation of the 16S rRNA at the A site. The polypeptide is Small ribosomal subunit protein uS14 (Dictyoglomus thermophilum (strain ATCC 35947 / DSM 3960 / H-6-12)).